We begin with the raw amino-acid sequence, 1829 residues long: Unconventional myosin-Va (1829 aa).

The 53-residue stretch at 8 to 60 folds into the Myosin N-terminal SH3-like domain; the sequence is TKYARVWIPDPEEVWKSAELLKDYKPGDKVLQLRLEEGKDLEYCLDPKTKELP. The region spanning 69 to 764 is the Myosin motor domain; that stretch reads VGENDLTALS…QVAYLEKIRA (696 aa). An ATP-binding site is contributed by 163 to 170; that stretch reads GESGAGKT. Positions 599 to 635 are disordered; the sequence is AISPTSATPSGRVPLSRTPVKPAKARPGQTSKEHKKT. Residues 644–666 form an actin-binding region; it reads LHLLMETLNATTPHYVRCIKPND. 6 consecutive IQ domains span residues 767–789, 790–814, 815–837, 838–862, 863–887, and 888–915; these read LRAA…KYMR, MRRA…TFLR, RTRA…RYQC, MRDA…QMML, REHK…HRTL, and KAIV…EARS. 2 coiled-coil regions span residues 916–1239 and 1315–1419; these read VERY…PEVT and GLKE…ELEV. 2 disordered regions span residues 1106–1148 and 1170–1199; these read IPKP…SEKK and KQSL…PIRG. A compositionally biased stretch (polar residues) spans 1117–1131; that stretch reads THSSNESEYTFSSEI. Composition is skewed to basic and acidic residues over residues 1137-1148 and 1170-1196; these read LPLRMEEPSEKK and KQSL…ERPP. One can recognise a Dilute domain in the interval 1508–1784; it reads TSTINGIKKV…IRTIQLRLRD (277 aa). A Phosphothreonine modification is found at Thr1734.

The protein belongs to the TRAFAC class myosin-kinesin ATPase superfamily. Myosin family. In terms of assembly, may be a homodimer, which associates with multiple calmodulin or myosin light chains. In terms of tissue distribution, neuronal and non-neuronal cells of the brain.

The protein resides in the golgi apparatus membrane. It catalyses the reaction ATP + H2O = ADP + phosphate + H(+). Processive actin-based motor that can move in large steps approximating the 36-nm pseudo-repeat of the actin filament. Can hydrolyze ATP in the presence of actin, which is essential for its function as a motor protein. Involved in melanosome transport. Also mediates the transport of vesicles to the plasma membrane. May also be required for some polarization process involved in dendrite formation. The polypeptide is Unconventional myosin-Va (MYO5A) (Gallus gallus (Chicken)).